Reading from the N-terminus, the 329-residue chain is Probable cell division protein WhiA (329 aa).

Residues 275-308 (SLEELGALADPPLTKDAVAGRIRRLLAMADKRAQ) constitute a DNA-binding region (H-T-H motif).

Belongs to the WhiA family.

Functionally, involved in cell division and chromosome segregation. This is Probable cell division protein WhiA from Streptomyces griseus subsp. griseus (strain JCM 4626 / CBS 651.72 / NBRC 13350 / KCC S-0626 / ISP 5235).